Reading from the N-terminus, the 225-residue chain is MDTADPPLAVDIDGTLSRADRSIDGRVLDVLRGWDGPVVVATGKALPYAVALCQFAGIDERVIAENGGVAYVGDELLHFGDSRAVEQVAAAFEDAGHDIGWGDADLTNRWRETELAVSREQPLDVLSALAADHGLHVVDTGFAYHVKPESMSKGNALPAVAARLGVTAGDFVAVGDSANDVELFEAVGESYAVGNADDHAKGAAETVLSETHGDGFLAAVDRIRS.

The active-site Nucleophile is Asp-11. Mg(2+)-binding residues include Asp-11 and Asp-13. Position 153 (Lys-153) interacts with substrate. Asp-176 and Asp-180 together coordinate Mg(2+).

Belongs to the archaeal SPP-like hydrolase family. It depends on Mg(2+) as a cofactor.

The enzyme catalyses 2-phosphoglycolate + H2O = glycolate + phosphate. Functionally, catalyzes the dephosphorylation of 2-phosphoglycolate. This is Phosphoglycolate phosphatase from Halobacterium salinarum (strain ATCC 29341 / DSM 671 / R1).